A 317-amino-acid polypeptide reads, in one-letter code: MPALGSPRRLLGSLNCTPPATLPLTLAPNRTGPQCLEVSIPDGLFLSLGLVSLVENVLVVAAIAKNRNLHSPMYYFICCLAMSDLLVSVSNVLETAVMLLLEAGVLATRAAVVQQLDNVIDVLICSSMVSSLCFLGAIAVDRYISIFYALRYHSVVTLPRAWRIIAAIWVASILTSVLSITYYNHTVVLLCLVGFFIAMLALMAVLYVHMLARACQHARGIARLQKRQRPIHQGFGLKGAATLTILLGVFFLCWGPFFLHLSLIVLCPQHPTCGCIFKNFNLFLALIICNAIVDPLIYAFRSQELRKTLQEVLQCSW.

Over 1–37 (MPALGSPRRLLGSLNCTPPATLPLTLAPNRTGPQCLE) the chain is Extracellular. The N-linked (GlcNAc...) asparagine glycan is linked to Asn-29. The helical transmembrane segment at 38–63 (VSIPDGLFLSLGLVSLVENVLVVAAI) threads the bilayer. Residues 64–72 (AKNRNLHSP) are Cytoplasmic-facing. Residues 73–93 (MYYFICCLAMSDLLVSVSNVL) traverse the membrane as a helical segment. Residues 94–118 (ETAVMLLLEAGVLATRAAVVQQLDN) lie on the Extracellular side of the membrane. A helical transmembrane segment spans residues 119 to 140 (VIDVLICSSMVSSLCFLGAIAV). The Cytoplasmic segment spans residues 141-163 (DRYISIFYALRYHSVVTLPRAWR). The helical transmembrane segment at 164 to 183 (IIAAIWVASILTSVLSITYY) threads the bilayer. Residues 184-191 (NHTVVLLC) lie on the Extracellular side of the membrane. Residues 192–211 (LVGFFIAMLALMAVLYVHML) form a helical membrane-spanning segment. The Cytoplasmic portion of the chain corresponds to 212 to 240 (ARACQHARGIARLQKRQRPIHQGFGLKGA). The chain crosses the membrane as a helical span at residues 241–266 (ATLTILLGVFFLCWGPFFLHLSLIVL). Residues 267–279 (CPQHPTCGCIFKN) lie on the Extracellular side of the membrane. Residues 280-300 (FNLFLALIICNAIVDPLIYAF) traverse the membrane as a helical segment. At 301–317 (RSQELRKTLQEVLQCSW) the chain is on the cytoplasmic side. Cys-315 is lipidated: S-palmitoyl cysteine.

This sequence belongs to the G-protein coupled receptor 1 family. Interacts with MGRN1, but does not undergo MGRN1-mediated ubiquitination; this interaction competes with GNAS-binding and thus inhibits agonist-induced cAMP production. Interacts with OPN3; the interaction results in a decrease in MC1R-mediated cAMP signaling and ultimately a decrease in melanin production in melanocytes.

The protein resides in the cell membrane. Receptor for MSH (alpha, beta and gamma) and ACTH. The activity of this receptor is mediated by G proteins which activate adenylate cyclase. Mediates melanogenesis, the production of eumelanin (black/brown) and phaeomelanin (red/yellow), via regulation of cAMP signaling in melanocytes. The sequence is that of Melanocyte-stimulating hormone receptor (MC1R) from Capra hircus (Goat).